The chain runs to 597 residues: DNA mismatch repair protein MutL (597 aa).

Belongs to the DNA mismatch repair MutL/HexB family.

This protein is involved in the repair of mismatches in DNA. It is required for dam-dependent methyl-directed DNA mismatch repair. May act as a 'molecular matchmaker', a protein that promotes the formation of a stable complex between two or more DNA-binding proteins in an ATP-dependent manner without itself being part of a final effector complex. This chain is DNA mismatch repair protein MutL, found in Rhodopseudomonas palustris (strain HaA2).